We begin with the raw amino-acid sequence, 722 residues long: Protein Aster-A (722 aa).

Residues 1-62 (MFDTTPHSGR…KSGVSGTLST (62 aa)) form a disordered region. Over residues 8 to 18 (SGRSSPSSSPS) the composition is skewed to low complexity. Positions 93–160 (EDFRKLFSKL…KEVTCLKKEK (68 aa)) constitute a GRAM domain. Positions 256–336 (ISPSGAADHS…DGPTSSLGPL (81 aa)) are disordered. Residues Ser-265, Ser-269, Ser-273, and Ser-417 each carry the phosphoserine modification. In terms of domain architecture, VASt spans 369–540 (SGRLLINSVF…ELAKAEKLSL (172 aa)). The interval 561 to 600 (LSWRGHRDGPQHPDPDPCTQTSMHTSGSLSSRFSEPSVDQ) is disordered. Over residues 565–575 (GHRDGPQHPDP) the composition is skewed to basic and acidic residues. Polar residues predominate over residues 578 to 594 (CTQTSMHTSGSLSSRFS). Residues 609–629 (ALVLISIVLIVLIALNALLFY) form a helical membrane-spanning segment.

In terms of tissue distribution, highly expressed in the brain.

The protein localises to the endoplasmic reticulum membrane. Its subcellular location is the cell membrane. The protein resides in the cytoplasmic vesicle. It localises to the autophagosome. In terms of biological role, cholesterol transporter that mediates non-vesicular transport of cholesterol from the plasma membrane (PM) to the endoplasmic reticulum (ER). Contains unique domains for binding cholesterol and the PM, thereby serving as a molecular bridge for the transfer of cholesterol from the PM to the ER. Plays a crucial role in cholesterol homeostasis and has the unique ability to localize to the PM based on the level of membrane cholesterol. In lipid-poor conditions localizes to the ER membrane and in response to excess cholesterol in the PM is recruited to the endoplasmic reticulum-plasma membrane contact sites (EPCS) which is mediated by the GRAM domain. At the EPCS, the sterol-binding VASt/ASTER domain binds to the cholesterol in the PM and facilitates its transfer from the PM to ER. May play a role in tumor progression. Plays a role in autophagy regulation and is required for biogenesis of the autophagosome. This function in autophagy requires its cholesterol-transfer activity. This chain is Protein Aster-A, found in Mus musculus (Mouse).